The primary structure comprises 431 residues: MFDLSLENCRVDRDLTVNIGVDDGKIVQISRGRIDASEKIDLKGYFVLPGLIDAHVHFRDPGLEYKEDFRTGSMAAAHGGFSTVLDMPNTVPPADNAAEFERKIRIGERKSVVDFGLHAGFRSVSDVKGILRFMPASFKVFMDLTGISTVDGLFRELKDLSAPVPVTVHCENRDVVMKSMKELKDRSDPSAYALARPPLAEEVSVAEVLALSIHHEHPVHICHLSTVKALQLVEPFREYVTCEVTPHHLLLDSGAFRRFGTMVKTNPPLRPPESRIYPEFLDRINIIGTDHAPHGIEEKRKGIWDAPPGIPNLEVVLKLLLTLVSKGRMSLSTIRRMLAEEPARIFGLRSKGRIAEGMDADFTVIDLKETGRIRSDEFYSKAHYTPFEGFSYTGGPVMTIVRGRAVMRDGEVLEGNGRYIPAEHDGKHGSA.

Zn(2+)-binding residues include histidine 55 and histidine 57. Residues 57–59 (HFR) and asparagine 89 each bind substrate. Residues lysine 139, histidine 169, histidine 223, and aspartate 290 each coordinate Zn(2+). N6-carboxylysine is present on lysine 139. Aspartate 290 is a catalytic residue. Residues histidine 294 and 308–309 (PG) contribute to the substrate site.

Belongs to the metallo-dependent hydrolases superfamily. DHOase family. Class I DHOase subfamily. It depends on Zn(2+) as a cofactor.

The catalysed reaction is (S)-dihydroorotate + H2O = N-carbamoyl-L-aspartate + H(+). The protein operates within pyrimidine metabolism; UMP biosynthesis via de novo pathway; (S)-dihydroorotate from bicarbonate: step 3/3. Functionally, catalyzes the reversible cyclization of carbamoyl aspartate to dihydroorotate. This is Dihydroorotase from Methanothermobacter thermautotrophicus (strain ATCC 29096 / DSM 1053 / JCM 10044 / NBRC 100330 / Delta H) (Methanobacterium thermoautotrophicum).